We begin with the raw amino-acid sequence, 302 residues long: Putative glycine N-acyltransferase-like protein 1B (302 aa).

This sequence belongs to the glycine N-acyltransferase family.

It catalyses the reaction an acyl-CoA + L-glutamine = an N(2)-acyl-L-glutamine + CoA + H(+). In terms of biological role, putative acyltransferase which transfers an acyl group to the N-terminus of glutamine. Can use phenylacetyl-CoA as an acyl donor. This chain is Putative glycine N-acyltransferase-like protein 1B, found in Homo sapiens (Human).